The following is a 218-amino-acid chain: uncharacterized protein (218 aa).

3 disordered regions span residues 30 to 71 (FSHR…RSPP), 93 to 120 (SGRG…PRPD), and 133 to 209 (MEVE…PGFP). Residues 43 to 71 (PGAPAVVPAPVSAPRPASSPARSESRSPP) show a composition bias toward low complexity. Positions 94 to 110 (GRGGGGGGGGGARTGGG) are enriched in gly residues. A compositionally biased stretch (pro residues) spans 138–148 (PPHPPPQPQVC). Gly residues predominate over residues 156 to 171 (PGHGRAGLPEGKGPGG). Residues 191-209 (RAPSPAAPRRGRLPAPGFP) show a composition bias toward low complexity.

This is an uncharacterized protein from Homo sapiens (Human).